The primary structure comprises 186 residues: MKTAQELRAGNVFMVGNDPMVVQKTEYIKGGRSSAKVSMKLKNLLTGAASETIYKADDKFDVVILSRKNCTYSYFADPMYVFMDEEFNQYEIEADNIGDALKFIVDGMEDQCEVTFYEGNPISVELPTIIVREVDYTEPAVKGDTSGKVMKTARLVGGTEIQVMSYIENGDKVEIDTRTGEFRKRA.

The protein belongs to the elongation factor P family.

The protein resides in the cytoplasm. The protein operates within protein biosynthesis; polypeptide chain elongation. Functionally, involved in peptide bond synthesis. Stimulates efficient translation and peptide-bond synthesis on native or reconstituted 70S ribosomes in vitro. Probably functions indirectly by altering the affinity of the ribosome for aminoacyl-tRNA, thus increasing their reactivity as acceptors for peptidyl transferase. The sequence is that of Elongation factor P from Neisseria gonorrhoeae (strain NCCP11945).